Here is a 142-residue protein sequence, read N- to C-terminus: Small ribosomal subunit protein uS9 (142 aa).

This sequence belongs to the universal ribosomal protein uS9 family.

The protein resides in the cytoplasm. This Syntrichia ruralis (Great hairy screw-moss) protein is Small ribosomal subunit protein uS9 (RPS16).